We begin with the raw amino-acid sequence, 247 residues long: Sugar fermentation stimulation protein homolog (247 aa).

This sequence belongs to the SfsA family.

The polypeptide is Sugar fermentation stimulation protein homolog (Methylorubrum populi (strain ATCC BAA-705 / NCIMB 13946 / BJ001) (Methylobacterium populi)).